A 1172-amino-acid polypeptide reads, in one-letter code: Phytochrome B (1172 aa).

Over residues 1–16 (MVSGVGGSGGGRGGGR) the composition is skewed to gly residues. The disordered stretch occupies residues 1 to 54 (MVSGVGGSGGGRGGGRGGEEEPSSSHTPNNRRGGEQAQSSGTKSLRPRSNTESM). Polar residues predominate over residues 24–54 (SSHTPNNRRGGEQAQSSGTKSLRPRSNTESM). The GAF domain occupies 252–433 (DIKLLCDTVV…AFGLQLNMEL (182 aa)). Residue C357 coordinates phytochromobilin. PAS domains lie at 652–723 (VARE…LRGD) and 786–857 (DYKA…MIVL). In terms of domain architecture, Histidine kinase spans 934–1153 (YICQVIKNPL…LIILELPVPR (220 aa)).

The protein belongs to the phytochrome family. In terms of assembly, homodimer. Interacts with ADO1 and PKS4. Stabilized by interactions with PAPP5 and FYPP3 which are enhanced in the phosphorylated Pfr form. Interacts with VOZ1 and VOZ2. Binds, via its photosensory domain, to PTAC12/HMR/PAP5 when photoactivated; this interaction stimulates its localization to photobodies. Interacts with CRY1 specifically when in the dark/far-red (Pr) state, but not when red light-activated (Pfr). Interacts with PIF4 and PIF5 in response to low blue light (LBL). Component of a red light-dependent nuclear complex made of PHL, PHYB and CO. Interacts directly with PHL. Binds to UNE10/PIF8 when red light-activated (Pfr). When light-activated, interacts with PCH1 and PCHL. Associated with DRT111/RSN2/SFPS, SMP2 and SWAP1 in nuclear photobodies upon response to red light (Pfr form). Contains one covalently linked phytochromobilin chromophore. In terms of tissue distribution, expressed in fruits, flowers, leaves, stems, seedlings and roots.

The protein localises to the cytoplasm. Its subcellular location is the nucleus. It is found in the nucleoplasm. It localises to the nucleus speckle. Regulatory photoreceptor which exists in two forms that are reversibly interconvertible by light: the Pr form that absorbs maximally in the red region of the spectrum and the Pfr form that absorbs maximally in the far-red region. Photoconversion of Pr to Pfr induces an array of morphogenetic responses, whereas reconversion of Pfr to Pr cancels the induction of those responses. Pfr controls the expression of a number of nuclear genes including those encoding the small subunit of ribulose-bisphosphate carboxylase, chlorophyll A/B binding protein, protochlorophyllide reductase, rRNA, etc. It also controls the expression of its own gene(s) in a negative feedback fashion. Involved in the flowering time regulation. Involved in light-regulated circadian phase control that triggers stomatal aperture, stomatal conductance, and CO(2) assimilation. Implicated in red light perception, and, to a lower extent, in blue light signaling. Controls thermomorphogenesis in the daytime and regulates temperature responses by associating with the promoters of key target genes in a temperature-dependent manner and subsequently repressing their expression in a PIF4-dependent manner (temperature-responsive transcriptional regulator); this process requires PTAC12/HMR/PAP5 (transcriptional activator). Thermal timer that integrates temperature information over the course of the night. Detabilizes UNE10/PIF8 in red light. The chain is Phytochrome B from Arabidopsis thaliana (Mouse-ear cress).